The chain runs to 254 residues: Large ribosomal subunit protein uL2 (254 aa).

Belongs to the universal ribosomal protein uL2 family.

In Eremothecium gossypii (strain ATCC 10895 / CBS 109.51 / FGSC 9923 / NRRL Y-1056) (Yeast), this protein is Large ribosomal subunit protein uL2 (RPL2).